A 305-amino-acid chain; its full sequence is U6 small nuclear RNA (adenine-(43)-N(6))-methyltransferase (305 aa).

Positions 87, 112, 135, 166, and 188 each coordinate S-adenosyl-L-methionine. The segment at 197–221 (PNPLGGNTRNPERRPAPNNARTGSQ) is disordered.

This sequence belongs to the methyltransferase superfamily. METTL16/RlmF family.

The catalysed reaction is adenosine in U6 snRNA + S-adenosyl-L-methionine = N(6)-methyladenosine in U6 snRNA + S-adenosyl-L-homocysteine + H(+). Its function is as follows. RNA N6-methyltransferase that mediates N6-methylation of adenine of U6 small nuclear RNA (U6 snRNA). This Drosophila melanogaster (Fruit fly) protein is U6 small nuclear RNA (adenine-(43)-N(6))-methyltransferase.